We begin with the raw amino-acid sequence, 216 residues long: MELTPHEARVIGVLLEKEITTPEQYPLSLNSLTSGCNQKTSREPVLNLSESEVQNTLDALTKKRLISEQSGFGSRVVKYKHRFCNTEFSDLQLKSSELAVICLLLLRGPQTPGELRTRSNRLHDFHDVSEVEATLNELHRREAPLVMLLAKEPGKREARYRQLFSEVDANLVQALSSSLGAETASPQEKSALEARVCTLEQEVTELKAQLQSLLNN.

The protein belongs to the UPF0502 family.

The protein is UPF0502 protein Spea_2482 of Shewanella pealeana (strain ATCC 700345 / ANG-SQ1).